A 489-amino-acid polypeptide reads, in one-letter code: Betaine aldehyde dehydrogenase (489 aa).

The K(+) site is built by threonine 26 and aspartate 93. 150 to 152 (GAW) lines the NAD(+) pocket. Lysine 162 acts as the Charge relay system in catalysis. Position 176–179 (176–179 (KPSE)) interacts with NAD(+). Valine 180 provides a ligand contact to K(+). 229-232 (GVET) contributes to the NAD(+) binding site. Leucine 245 serves as a coordination point for K(+). The Proton acceptor role is filled by glutamate 251. Residues glycine 253, cysteine 285, and glutamate 386 each coordinate NAD(+). The active-site Nucleophile is cysteine 285. Cysteine 285 is subject to Cysteine sulfenic acid (-SOH). Lysine 456 and glycine 459 together coordinate K(+). The Charge relay system role is filled by glutamate 463.

Belongs to the aldehyde dehydrogenase family. As to quaternary structure, dimer of dimers. K(+) serves as cofactor.

It carries out the reaction betaine aldehyde + NAD(+) + H2O = glycine betaine + NADH + 2 H(+). It participates in amine and polyamine biosynthesis; betaine biosynthesis via choline pathway; betaine from betaine aldehyde: step 1/1. In terms of biological role, involved in the biosynthesis of the osmoprotectant glycine betaine. Catalyzes the irreversible oxidation of betaine aldehyde to the corresponding acid. The chain is Betaine aldehyde dehydrogenase from Burkholderia pseudomallei (strain 668).